Consider the following 352-residue polypeptide: UDP-3-O-acylglucosamine N-acyltransferase (352 aa).

H244 acts as the Proton acceptor in catalysis.

Belongs to the transferase hexapeptide repeat family. LpxD subfamily. As to quaternary structure, homotrimer.

It carries out the reaction a UDP-3-O-[(3R)-3-hydroxyacyl]-alpha-D-glucosamine + a (3R)-hydroxyacyl-[ACP] = a UDP-2-N,3-O-bis[(3R)-3-hydroxyacyl]-alpha-D-glucosamine + holo-[ACP] + H(+). It functions in the pathway bacterial outer membrane biogenesis; LPS lipid A biosynthesis. Its function is as follows. Catalyzes the N-acylation of UDP-3-O-acylglucosamine using 3-hydroxyacyl-ACP as the acyl donor. Is involved in the biosynthesis of lipid A, a phosphorylated glycolipid that anchors the lipopolysaccharide to the outer membrane of the cell. The sequence is that of UDP-3-O-acylglucosamine N-acyltransferase from Anaeromyxobacter sp. (strain Fw109-5).